We begin with the raw amino-acid sequence, 278 residues long: Coiled-coil domain-containing protein 121 (278 aa).

Coiled coils occupy residues 1–30 and 105–243; these read MTDLNKHIKQAQTQRKQLLEESRELHREKL and QAMR…LIQA. Residues 253-278 are disordered; sequence QCLNRQDVPKTTPSLPQGTKSRINPK.

This Homo sapiens (Human) protein is Coiled-coil domain-containing protein 121 (CCDC121).